A 550-amino-acid chain; its full sequence is Sterol O-acyltransferase 1 (550 aa).

At M1 the chain carries N-acetylmethionine. The disordered stretch occupies residues 1–36; it reads MVGEEKMSLRNRLSKSRENPEEDEDQRKPAKESLEA. The Cytoplasmic segment spans residues 1–138; that stretch reads MVGEEKMSLR…LDELLEVDHI (138 aa). A Phosphoserine modification is found at S8. A compositionally biased stretch (basic and acidic residues) spans 15–34; the sequence is KSRENPEEDEDQRKPAKESL. H137 is a binding site for cholesterol. A helical membrane pass occupies residues 139–160; that stretch reads RTIYHMFIALLILFILSTLVVD. Topologically, residues 161–180 are lumenal; it reads YIDEGRLVLEFSLLSYAFGK. Residues 181–206 traverse the membrane as a helical segment; it reads FPTVVWTWWIMFLSTFSVPYFLFQRW. The Cytoplasmic segment spans residues 207 to 218; the sequence is ATGYSKSSHPLI. A helical membrane pass occupies residues 219–244; the sequence is NSLFHGFLFMVFQIGILGFGPTYVVL. Residues 245–252 are Lumenal-facing; sequence AYTLPPAS. Residues 253 to 276 traverse the membrane as a helical segment; it reads RFIIIFEQIRFVMKAHSFVRENVP. At 277-319 the chain is on the cytoplasmic side; sequence RVLNSAKEKSSTVPIPTVNQYLYFLFAPTLIYRDSYPRNPTVR. Residues 320–352 form a helical membrane-spanning segment; sequence WGYVAMQFAQVFGCFFYVYYIFERLCAPLFRNI. At 353-369 the chain is on the lumenal side; the sequence is KQEPFSARVLVLCVFNS. A helical transmembrane segment spans residues 370-395; that stretch reads ILPGVLILFLTFFAFLHCWLNAFAEM. Residues 396–443 are Cytoplasmic-facing; sequence LRFGDRMFYKDWWNSTSYSNYYRTWNVVVHDWLYYYAYKDFLWFFSKR. The FYXDWWN motif signature appears at 403–409; sequence FYKDWWN. Residues N415, R418, N421, H425, Y433, K445, and S456 each contribute to the an acyl-CoA site. A helical membrane pass occupies residues 444–468; sequence FKSAAMLAAFAVSAVVHEYALAVCL. H460 is a catalytic residue. The Lumenal segment spans residues 469-474; sequence SFFYPV. Residues 475–490 form a helical membrane-spanning segment; it reads LFVLFMFFGMAFNFIV. The Cytoplasmic portion of the chain corresponds to 491-496; it reads NDSRKK. The helical transmembrane segment at 497–528 threads the bilayer; the sequence is PIWNVMMWTSLFLGNGVLLCFYSQEWYARQHC. C528 and C546 are oxidised to a cystine. Over 529–550 the chain is Lumenal; the sequence is PLKNPTFLDYVRPRSWTCRYVF.

Belongs to the membrane-bound acyltransferase family. Sterol o-acyltransferase subfamily. In terms of assembly, may form homo- or heterodimers. Interacts with UBIAD1. As to expression, expressed in most tissues, but most strongly in the adrenal gland. Expressed more strongly in liver Kupffer cells than in hepatocytes.

It is found in the endoplasmic reticulum membrane. It catalyses the reaction a sterol + a long-chain fatty acyl-CoA = a long-chain 3-hydroxysterol ester + CoA. The catalysed reaction is cholesterol + an acyl-CoA = a cholesterol ester + CoA. It carries out the reaction cholesterol + (9Z)-octadecenoyl-CoA = cholesteryl (9Z-octadecenoate) + CoA. The enzyme catalyses cholesterol + hexadecanoyl-CoA = cholesteryl hexadecanoate + CoA. It catalyses the reaction octadecanoyl-CoA + cholesterol = cholesteryl octadecanoate + CoA. The catalysed reaction is (9Z,12Z)-octadecadienoyl-CoA + cholesterol = cholesteryl (9Z,12Z)-octadecadienoate + CoA. It carries out the reaction (5Z,8Z,11Z,14Z)-eicosatetraenoyl-CoA + cholesterol = cholesteryl (5Z,8Z,11Z,14Z)-eicosatetraenoate + CoA. The enzyme catalyses (9Z)-hexadecenoyl-CoA + cholesterol = cholesteryl (9Z)-hexadecenoate + CoA. It catalyses the reaction (11Z)-octadecenoyl-CoA + cholesterol = cholesteryl (11Z)-octadecenoate + CoA. The catalysed reaction is (7Z)-octadecenoyl-CoA + cholesterol = cholesteryl (7Z)-octadecenoate + CoA. Functionally, catalyzes the formation of fatty acid-cholesterol esters, which are less soluble in membranes than cholesterol. Plays a role in lipoprotein assembly and dietary cholesterol absorption. Preferentially utilizes oleoyl-CoA ((9Z)-octadecenoyl-CoA) as a substrate: shows a higher activity towards an acyl-CoA substrate with a double bond at the delta-9 position (9Z) than towards saturated acyl-CoA or an unsaturated acyl-CoA with a double bond at the delta-7 (7Z) or delta-11 (11Z) positions. The protein is Sterol O-acyltransferase 1 (SOAT1) of Macaca fascicularis (Crab-eating macaque).